A 96-amino-acid chain; its full sequence is Putative membrane protein insertion efficiency factor (96 aa).

A disordered region spans residues 68-96 (DPVPEHFPARHPRPQGSPPTDHPPTDQPS). The span at 82 to 96 (QGSPPTDHPPTDQPS) shows a compositional bias: pro residues.

This sequence belongs to the UPF0161 family.

Its subcellular location is the cell membrane. Its function is as follows. Could be involved in insertion of integral membrane proteins into the membrane. In Deinococcus radiodurans (strain ATCC 13939 / DSM 20539 / JCM 16871 / CCUG 27074 / LMG 4051 / NBRC 15346 / NCIMB 9279 / VKM B-1422 / R1), this protein is Putative membrane protein insertion efficiency factor.